A 342-amino-acid polypeptide reads, in one-letter code: tRNA N6-adenosine threonylcarbamoyltransferase (342 aa).

Residues His119 and His123 each contribute to the Fe cation site. Substrate is bound by residues 142 to 146 (VVSGG), Asp175, Gly188, and Asn282. Residue Asp310 participates in Fe cation binding.

Belongs to the KAE1 / TsaD family. Requires Fe(2+) as cofactor.

Its subcellular location is the cytoplasm. It carries out the reaction L-threonylcarbamoyladenylate + adenosine(37) in tRNA = N(6)-L-threonylcarbamoyladenosine(37) in tRNA + AMP + H(+). Required for the formation of a threonylcarbamoyl group on adenosine at position 37 (t(6)A37) in tRNAs that read codons beginning with adenine. Is involved in the transfer of the threonylcarbamoyl moiety of threonylcarbamoyl-AMP (TC-AMP) to the N6 group of A37, together with TsaE and TsaB. TsaD likely plays a direct catalytic role in this reaction. The sequence is that of tRNA N6-adenosine threonylcarbamoyltransferase from Moorella thermoacetica (strain ATCC 39073 / JCM 9320).